The sequence spans 226 residues: Cytidylate kinase (226 aa).

12-20 (GPSGAGKGT) contributes to the ATP binding site.

It belongs to the cytidylate kinase family. Type 1 subfamily.

It is found in the cytoplasm. The enzyme catalyses CMP + ATP = CDP + ADP. It carries out the reaction dCMP + ATP = dCDP + ADP. In Vibrio vulnificus (strain CMCP6), this protein is Cytidylate kinase.